We begin with the raw amino-acid sequence, 166 residues long: Phosphopantetheine adenylyltransferase (166 aa).

Position 10 (Ser10) interacts with substrate. ATP contacts are provided by residues 10–11 and His18; that span reads SF. Substrate is bound by residues Lys42, Ala79, and Arg93. Residues 94-96, Glu104, and 129-135 each bind ATP; these read GLR and VRPITAT.

Belongs to the bacterial CoaD family. Homohexamer. It depends on Mg(2+) as a cofactor.

The protein localises to the cytoplasm. The enzyme catalyses (R)-4'-phosphopantetheine + ATP + H(+) = 3'-dephospho-CoA + diphosphate. Its pathway is cofactor biosynthesis; coenzyme A biosynthesis; CoA from (R)-pantothenate: step 4/5. Reversibly transfers an adenylyl group from ATP to 4'-phosphopantetheine, yielding dephospho-CoA (dPCoA) and pyrophosphate. This is Phosphopantetheine adenylyltransferase from Methylobacterium sp. (strain 4-46).